Here is a 267-residue protein sequence, read N- to C-terminus: L-aspartate dehydrogenase 2 (267 aa).

Residues A123 and N189 each contribute to the NAD(+) site. H219 is an active-site residue.

This sequence belongs to the L-aspartate dehydrogenase family.

The catalysed reaction is L-aspartate + NADP(+) + H2O = oxaloacetate + NH4(+) + NADPH + H(+). It catalyses the reaction L-aspartate + NAD(+) + H2O = oxaloacetate + NH4(+) + NADH + H(+). The protein operates within cofactor biosynthesis; NAD(+) biosynthesis; iminoaspartate from L-aspartate (dehydrogenase route): step 1/1. Specifically catalyzes the NAD or NADP-dependent dehydrogenation of L-aspartate to iminoaspartate. The chain is L-aspartate dehydrogenase 2 from Bordetella pertussis (strain Tohama I / ATCC BAA-589 / NCTC 13251).